The sequence spans 254 residues: Probable 2,4-dienoyl-CoA reductase [(2E)-enoyl-CoA-producing] (254 aa).

NADP(+) is bound at residue 6–38 (VIITGGSSGMGKAMAKKQAELGWHVMVTGRNHE). A substrate-binding site is contributed by Thr100. Tyr142 acts as the Proton acceptor in catalysis. Lys157 is an NAD(+) binding site.

Belongs to the short-chain dehydrogenases/reductases (SDR) family. 2,4-dienoyl-CoA reductase subfamily.

The catalysed reaction is a 4,5-saturated-(2E)-enoyl-CoA + NADP(+) = a (2E,4E)-dienoyl-CoA + NADPH + H(+). It catalyses the reaction a (2E,4Z)-dienoyl-CoA + NADPH + H(+) = a 4,5-saturated-(2E)-enoyl-CoA + NADP(+). Its pathway is lipid metabolism; fatty acid beta-oxidation. Auxiliary enzyme of beta-oxidation. It participates in the metabolism of unsaturated fatty enoyl-CoA esters having double bonds in both even- and odd-numbered positions. Catalyzes the NADP-dependent reduction of 2,4-dienoyl-CoA to yield trans-3-enoyl-CoA. The protein is Probable 2,4-dienoyl-CoA reductase [(2E)-enoyl-CoA-producing] (fadH) of Bacillus subtilis (strain 168).